A 360-amino-acid chain; its full sequence is 1-aminocyclopropane-1-carboxylate oxidase homolog 6 (360 aa).

The Fe2OG dioxygenase domain maps to 208–309; it reads KGLLLLCHYY…ISVASFFSTS (102 aa). Fe cation contacts are provided by H232, D234, and H288. R299 is a binding site for 2-oxoglutarate.

Belongs to the iron/ascorbate-dependent oxidoreductase family. Fe(2+) is required as a cofactor. In terms of tissue distribution, constitutively expressed in leaves and blades.

The sequence is that of 1-aminocyclopropane-1-carboxylate oxidase homolog 6 from Arabidopsis thaliana (Mouse-ear cress).